The chain runs to 95 residues: MGNINYQFGEIDAHGAAIRAQAAALETTHQAILATVRDAAEFWGGQGSTAHEMFIADLGRNFQMIYEQANSHGQKVQRASSSMADTDRSVSSAWS.

Residues 72 to 95 (HGQKVQRASSSMADTDRSVSSAWS) are disordered.

It belongs to the WXG100 family.

This is Putative ESAT-6-like protein X from Mycobacterium leprae (strain TN).